Consider the following 79-residue polypeptide: Translational regulator CsrA (79 aa).

This sequence belongs to the CsrA/RsmA family. As to quaternary structure, homodimer; the beta-strands of each monomer intercalate to form a hydrophobic core, while the alpha-helices form wings that extend away from the core.

Its subcellular location is the cytoplasm. Its function is as follows. A translational regulator that binds mRNA to regulate translation initiation and/or mRNA stability. Usually binds in the 5'-UTR at or near the Shine-Dalgarno sequence preventing ribosome-binding, thus repressing translation. Its main target seems to be the major flagellin gene, while its function is anatagonized by FliW. The protein is Translational regulator CsrA of Shouchella clausii (strain KSM-K16) (Alkalihalobacillus clausii).